The primary structure comprises 342 residues: Protein RecA (342 aa).

Residue 65 to 72 (GPESSGKT) coordinates ATP.

This sequence belongs to the RecA family.

The protein localises to the cytoplasm. Functionally, can catalyze the hydrolysis of ATP in the presence of single-stranded DNA, the ATP-dependent uptake of single-stranded DNA by duplex DNA, and the ATP-dependent hybridization of homologous single-stranded DNAs. It interacts with LexA causing its activation and leading to its autocatalytic cleavage. The chain is Protein RecA from Caldanaerobacter subterraneus subsp. tengcongensis (strain DSM 15242 / JCM 11007 / NBRC 100824 / MB4) (Thermoanaerobacter tengcongensis).